Reading from the N-terminus, the 73-residue chain is uncharacterized protein (73 aa).

A disordered region spans residues 48–73 (AKEPEKKTPSMEAKATSLSPNKASAS). Over residues 63–73 (TSLSPNKASAS) the composition is skewed to polar residues.

This is an uncharacterized protein from Saccharomyces cerevisiae (strain ATCC 204508 / S288c) (Baker's yeast).